The primary structure comprises 151 residues: Ribosome maturation factor RimP (151 aa).

Belongs to the RimP family.

The protein resides in the cytoplasm. Functionally, required for maturation of 30S ribosomal subunits. The chain is Ribosome maturation factor RimP from Crocosphaera subtropica (strain ATCC 51142 / BH68) (Cyanothece sp. (strain ATCC 51142)).